The chain runs to 611 residues: MRADDNPSARSLHAQFPGDDTRPTSKKELAGWYSYGWAAEVFTVCAMGSFLPITLEQMARDRGVLLSDKVTPCSASWNGTETTARTHGISPPWYGINATPGTSQCVVYILGAEINTASFAMYTFSVSVFVQAVLIISMSGAADHGSFRKTLLVAFAVIGSVCTMLFLSVVPKIYIVGALFAIVANTCFGASFVLLNSFLPLLVRHHPSLLGHENERSPELNHSHITDDRVQFAANADYGIDADATSPLLQPVQGDSDEHTTSRLPVTSVVISEELKLSTRISSLGIGIGYIGAVILQIICILVIIATRQTTFSLRLVLFLIGLWWFVFTIPAALWLRPRPGPPLPKAPQGKDNRSCVGYMVYAWKSLCRTAVRTRHLKDILLFLTAWFLLSDGIATVSGTAVLFAKTQLNMKPAALGLINVVTMMAGVFGAFSWSFVSRRLNLGASQTIIACILLFELIPIYGLLGFVPAIRKLGYLGLQQPWEMFPLGIVYGLVMGGLSSYCRSFFGELIPPGNEAAFYALYAITDKGSSIFGPAIVGLITDRYGEIRPAFVFLAVLIFLPLPLMLLVDVGRGKKDALALAVELEEGQSSNTQTYGTLSNCERNAVPTDQ.

Residues 1 to 24 form a disordered region; the sequence is MRADDNPSARSLHAQFPGDDTRPT. Residues 35 to 55 form a helical membrane-spanning segment; sequence YGWAAEVFTVCAMGSFLPITL. N-linked (GlcNAc...) asparagine glycosylation occurs at Asn-78. 3 helical membrane passes run 116–136, 151–171, and 175–195; these read TASF…VLII, LLVA…SVVP, and IVGA…FVLL. A glycan (N-linked (GlcNAc...) asparagine) is linked at Asn-221. Transmembrane regions (helical) follow at residues 286 to 306 and 316 to 336; these read IGIG…VIIA and LVLF…ALWL. An N-linked (GlcNAc...) asparagine glycan is attached at Asn-353. 6 helical membrane-spanning segments follow: residues 380 to 400, 414 to 434, 449 to 469, 483 to 503, 521 to 541, and 551 to 571; these read ILLF…VSGT, AALG…AFSW, IIAC…GFVP, WEMF…SSYC, ALYA…VGLI, and AFVF…LVDV.

It belongs to the ATG22 family.

The protein resides in the vacuole membrane. In terms of biological role, vacuolar effluxer which mediate the efflux of amino acids resulting from autophagic degradation. The release of autophagic amino acids allows the maintenance of protein synthesis and viability during nitrogen starvation. This is Autophagy-related protein 22-2 (atg22-2) from Aspergillus clavatus (strain ATCC 1007 / CBS 513.65 / DSM 816 / NCTC 3887 / NRRL 1 / QM 1276 / 107).